The following is a 362-amino-acid chain: MVRKALENLKPYVPGKPVEEVERELGITNIDKLASNENLWGISPKVAAAIKEAVDKVNYYPDGGAFRLKEKIAAKYGVTPDNIILGNGSDELVMFLAMALIDPGDEAIMPVPSFPRYEPVVTMMNGIAREIPLKEHRLDLKTMAEAVNEKTRLVYLCNPNNPTGTYITKGELEEFLERVPEEVVVVLDEAYFEFARLFNDYPDGLNFFKKRPNTVVLRTFSKAYGLAGLRVGYGFAPENLAKAINSLRPPFNVNFLAQMAAVAALDDEEYVREVVKNTDEGKKFLYQEIIRMGLSYIPSAANFLMIKTEKPSALVFRELLKRGVIVRSGDIFGMDDWIRVTVGTPVQNARFINELKMVLEIL.

An N6-(pyridoxal phosphate)lysine modification is found at Lys-222.

It belongs to the class-II pyridoxal-phosphate-dependent aminotransferase family. Histidinol-phosphate aminotransferase subfamily. As to quaternary structure, homodimer. Pyridoxal 5'-phosphate serves as cofactor.

The catalysed reaction is L-histidinol phosphate + 2-oxoglutarate = 3-(imidazol-4-yl)-2-oxopropyl phosphate + L-glutamate. The protein operates within amino-acid biosynthesis; L-histidine biosynthesis; L-histidine from 5-phospho-alpha-D-ribose 1-diphosphate: step 7/9. This Carboxydothermus hydrogenoformans (strain ATCC BAA-161 / DSM 6008 / Z-2901) protein is Histidinol-phosphate aminotransferase 2.